The sequence spans 86 residues: Conidiation-specific protein 10 (86 aa).

The segment covering 1 to 11 has biased composition (polar residues); the sequence is MAGTGNDNPGN. A disordered region spans residues 1–86; the sequence is MAGTGNDNPG…SGGTGADDDE (86 aa). The span at 49–58 shows a compositional bias: low complexity; sequence SKGGKASSGS. The segment covering 62–71 has biased composition (basic and acidic residues); the sequence is GSEKAREAGR. Over residues 75 to 86 the composition is skewed to gly residues; that stretch reads KASGGTGADDDE.

This sequence belongs to the con-10 family.

This is Conidiation-specific protein 10 (con-10) from Neurospora crassa (strain ATCC 24698 / 74-OR23-1A / CBS 708.71 / DSM 1257 / FGSC 987).